The sequence spans 174 residues: uncharacterized protein (174 aa).

This is an uncharacterized protein from Homo sapiens (Human).